We begin with the raw amino-acid sequence, 179 residues long: Inosine/xanthosine triphosphatase (179 aa).

8 to 13 is a substrate binding site; the sequence is TTNPAK. Residues Asp-38 and Glu-68 each contribute to the Mg(2+) site. A substrate-binding site is contributed by 68 to 69; the sequence is EA.

Belongs to the YjjX NTPase family. In terms of assembly, homodimer. The cofactor is Mg(2+). It depends on Mn(2+) as a cofactor.

The catalysed reaction is XTP + H2O = XDP + phosphate + H(+). The enzyme catalyses ITP + H2O = IDP + phosphate + H(+). Its function is as follows. Phosphatase that hydrolyzes non-canonical purine nucleotides such as XTP and ITP to their respective diphosphate derivatives. Probably excludes non-canonical purines from DNA/RNA precursor pool, thus preventing their incorporation into DNA/RNA and avoiding chromosomal lesions. In Pectobacterium carotovorum subsp. carotovorum (strain PC1), this protein is Inosine/xanthosine triphosphatase.